Reading from the N-terminus, the 256-residue chain is Beta-fibrinogenase-like (256 aa).

The N-terminal stretch at 1–18 (MVLIKVLANLLVLQLSYA) is a signal peptide. Positions 19-24 (QKSSEL) are excised as a propeptide. In terms of domain architecture, Peptidase S1 spans 25-247 (VVGGDECNIN…YTDWIQSIIA (223 aa)). Disulfide bonds link cysteine 31–cysteine 161, cysteine 49–cysteine 65, cysteine 96–cysteine 254, cysteine 140–cysteine 208, cysteine 172–cysteine 187, and cysteine 198–cysteine 223. Asparagine 44 is a glycosylation site (N-linked (GlcNAc...) asparagine). Histidine 64 serves as the catalytic Charge relay system. Asparagine 78 and asparagine 101 each carry an N-linked (GlcNAc...) asparagine glycan. Aspartate 108 acts as the Charge relay system in catalysis. Asparagine 152 carries an N-linked (GlcNAc...) asparagine glycan. Serine 202 serves as the catalytic Charge relay system.

Belongs to the peptidase S1 family. Snake venom subfamily. As to quaternary structure, monomer. Expressed by the venom gland.

It localises to the secreted. Functionally, snake venom serine protease that has fibrinogenolytic activities by hydrolyzing the beta chain of fibrinogen (FGB). Typical arginine esterase which hydrolyzes esters and amides of arginine. This chain is Beta-fibrinogenase-like, found in Daboia siamensis (Eastern Russel's viper).